Reading from the N-terminus, the 86-residue chain is Anti-adapter protein IraP (86 aa).

The stretch at 1 to 47 forms a coiled coil; the sequence is MKNLIAELLLKLAQKEEESKELVAQVEALEIIVTAMLRNMAQSEQQM.

It belongs to the IraP family. As to quaternary structure, interacts with RssB.

The protein resides in the cytoplasm. Its function is as follows. Inhibits RpoS proteolysis by regulating RssB activity, thereby increasing the stability of the sigma stress factor RpoS especially during phosphate and magnesium starvation, but also in stationary phase and during nitrogen starvation. Its effect on RpoS stability is due to its interaction with RssB, which probably blocks the interaction of RssB with RpoS, and the consequent delivery of the RssB-RpoS complex to the ClpXP protein degradation pathway. The chain is Anti-adapter protein IraP from Salmonella arizonae (strain ATCC BAA-731 / CDC346-86 / RSK2980).